A 134-amino-acid polypeptide reads, in one-letter code: Estradiol 17-beta-dehydrogenase 8 (134 aa).

S38 lines the substrate pocket. Residue K42 is modified to N6-succinyllysine. Y51 serves as the catalytic Proton acceptor. Residues Y51–K55 and I84–T86 each bind NAD(+). The residue at position 55 (K55) is an N6-succinyllysine.

Belongs to the short-chain dehydrogenases/reductases (SDR) family. Heterotetramer with CBR4; contains two molecules of HSD17B8 and CBR4.

Its subcellular location is the mitochondrion matrix. It carries out the reaction 17beta-estradiol + NAD(+) = estrone + NADH + H(+). The catalysed reaction is 17beta-estradiol + NADP(+) = estrone + NADPH + H(+). It catalyses the reaction testosterone + NAD(+) = androst-4-ene-3,17-dione + NADH + H(+). It participates in steroid biosynthesis; estrogen biosynthesis. Its pathway is lipid metabolism; fatty acid biosynthesis. Functionally, NAD-dependent 17-beta-hydroxysteroid dehydrogenase with highest activity towards estradiol. Has very low activity towards testosterone. The heterotetramer with CBR4 has NADH-dependent 3-ketoacyl-acyl carrier protein reductase activity, and thereby plays a role in mitochondrial fatty acid biosynthesis. Within the heterotetramer, HSD17B8 binds NADH; CBR4 binds NADPD. This chain is Estradiol 17-beta-dehydrogenase 8 (HSD17B8), found in Callithrix jacchus (White-tufted-ear marmoset).